The chain runs to 417 residues: Gamma-glutamyl phosphate reductase (417 aa).

It belongs to the gamma-glutamyl phosphate reductase family.

The protein localises to the cytoplasm. The enzyme catalyses L-glutamate 5-semialdehyde + phosphate + NADP(+) = L-glutamyl 5-phosphate + NADPH + H(+). It participates in amino-acid biosynthesis; L-proline biosynthesis; L-glutamate 5-semialdehyde from L-glutamate: step 2/2. In terms of biological role, catalyzes the NADPH-dependent reduction of L-glutamate 5-phosphate into L-glutamate 5-semialdehyde and phosphate. The product spontaneously undergoes cyclization to form 1-pyrroline-5-carboxylate. The chain is Gamma-glutamyl phosphate reductase from Escherichia coli (strain 55989 / EAEC).